The sequence spans 80 residues: Protein FAM229B (80 aa).

The interval 1–45 is disordered; that stretch reads MPFRFGTQPRRFPVEGGDSSIELESGLSSSASCTGKETSPNRQLR. Residues 15–32 show a composition bias toward low complexity; that stretch reads EGGDSSIELESGLSSSAS. A compositionally biased stretch (polar residues) spans 33-42; sequence CTGKETSPNR.

This sequence belongs to the FAM229 family.

The polypeptide is Protein FAM229B (Fam229b) (Mus musculus (Mouse)).